A 486-amino-acid chain; its full sequence is UDP-N-acetylmuramate--L-alanine ligase (486 aa).

123–129 contacts ATP; sequence GTHGKTT.

This sequence belongs to the MurCDEF family.

Its subcellular location is the cytoplasm. It catalyses the reaction UDP-N-acetyl-alpha-D-muramate + L-alanine + ATP = UDP-N-acetyl-alpha-D-muramoyl-L-alanine + ADP + phosphate + H(+). Its pathway is cell wall biogenesis; peptidoglycan biosynthesis. Its function is as follows. Cell wall formation. In Pseudomonas savastanoi pv. phaseolicola (strain 1448A / Race 6) (Pseudomonas syringae pv. phaseolicola (strain 1448A / Race 6)), this protein is UDP-N-acetylmuramate--L-alanine ligase.